Reading from the N-terminus, the 79-residue chain is Probable [Fe-S]-dependent transcriptional repressor (79 aa).

Residues cysteine 56, cysteine 61, cysteine 64, and cysteine 70 each coordinate iron-sulfur cluster.

The protein belongs to the FeoC family.

Functionally, may function as a transcriptional regulator that controls feoABC expression. The sequence is that of Probable [Fe-S]-dependent transcriptional repressor from Serratia proteamaculans (strain 568).